The chain runs to 208 residues: Ribosomal RNA small subunit methyltransferase G (208 aa).

Residues G73, L78, 127 to 128 (VE), and R141 each bind S-adenosyl-L-methionine.

This sequence belongs to the methyltransferase superfamily. RNA methyltransferase RsmG family.

The protein resides in the cytoplasm. It catalyses the reaction guanosine(527) in 16S rRNA + S-adenosyl-L-methionine = N(7)-methylguanosine(527) in 16S rRNA + S-adenosyl-L-homocysteine. Functionally, specifically methylates the N7 position of guanine in position 527 of 16S rRNA. This Cereibacter sphaeroides (strain ATCC 17025 / ATH 2.4.3) (Rhodobacter sphaeroides) protein is Ribosomal RNA small subunit methyltransferase G.